The primary structure comprises 264 residues: Undecaprenyl-diphosphatase (264 aa).

8 helical membrane passes run 1-21 (MDIV…FLPI), 39-59 (QGLA…VFYF), 83-103 (STLV…GLAF), 113-133 (SGIV…LADK), 143-163 (VTIK…IPGV), 181-201 (VGSA…AGGL), 220-240 (LAAL…MSII), and 244-264 (SMTP…FIFV).

This sequence belongs to the UppP family.

The protein localises to the cell inner membrane. It catalyses the reaction di-trans,octa-cis-undecaprenyl diphosphate + H2O = di-trans,octa-cis-undecaprenyl phosphate + phosphate + H(+). In terms of biological role, catalyzes the dephosphorylation of undecaprenyl diphosphate (UPP). Confers resistance to bacitracin. This chain is Undecaprenyl-diphosphatase, found in Campylobacter curvus (strain 525.92).